Consider the following 913-residue polypeptide: WD repeat-containing protein 44 (913 aa).

The span at Met1 to Pro14 shows a compositional bias: acidic residues. The tract at residues Met1–Pro24 is disordered. Residue Ala2 is modified to N-acetylalanine. The tract at residues Ala2 to Glu170 is binding activity. Ser3 is subject to Phosphoserine. Positions Glu9 to Glu15 match the FFAT-like motif motif. Tyr11 is modified (phosphotyrosine). A phosphoserine mark is found at Ser27, Ser50, Ser66, Ser71, Ser81, Ser96, and Ser126. Residues Glu119 to Lys184 adopt a coiled-coil conformation. Residues Thr158 and Thr219 each carry the phosphothreonine modification. The segment at Ala205–Leu348 is disordered. Residues Pro211–Pro257 form an important for interaction with ARHGAP26 AND ARHGAP10 region. Positions Pro233 to Pro256 are enriched in pro residues. Ser262 bears the Phosphoserine mark. Basic and acidic residues predominate over residues Ser262 to Lys278. Thr271 is subject to Phosphothreonine. Residues Asn280 to Ser311 are compositionally biased toward polar residues. Positions Val334–Glu347 are important for interaction with RAB11A. Phosphoserine; by PKB/AKT1 is present on residues Ser342 and Ser344. Thr349 is subject to Phosphothreonine. Disordered stretches follow at residues Ser397–Lys424 and Asp459–Thr480. Phosphoserine occurs at positions 403, 470, 471, and 472. Over residues Asp467 to Gly476 the composition is skewed to acidic residues. Phosphotyrosine is present on Tyr479. The stretch at Glu509 to Asn548 is one WD 1 repeat. The segment at Glu557–Ala593 is disordered. 2 positions are modified to phosphoserine: Ser561 and Ser565. Residues Ser561–Lys573 are compositionally biased toward low complexity. 6 WD repeats span residues Gly605–Cys643, Gln645–Trp685, Gly690–Gln729, Lys740–Lys779, Val784–Thr823, and Val876–Ser913.

As to quaternary structure, interacts with the GTP-bound form of RAB11A and RAB11B. Interacts with GRAF1/ARHGAP26 or GRAF2/ARHGAP10; the interaction connects the endoplasmic reticulum (ER) with the endosomal tubule. Interacts (via FFAT-like motif) with VAPA (via MSP domain) or VAPB (via MSP domain); the interaction connects the ER with the endosomal tubule. Does not bind to RAB7, RAB10, RAB14, RAB35 and RAB8A. In terms of processing, phosphorylated by ATK1; the phosphorylation stabilizes its interaction with RAB11A and RAB11B.

The protein resides in the cytoplasm. It localises to the cytosol. It is found in the perinuclear region. The protein localises to the endosome membrane. Its subcellular location is the golgi apparatus. The protein resides in the trans-Golgi network. In terms of biological role, downstream effector for Rab11 which regulates Rab11 intracellular membrane trafficking functions such as endocytic recycling, intracellular ciliogenesis and protein export. ATK1-mediated phosphorylation of WDR44 induces binding to Rab11 which activates endocytic recycling of transferrin receptor back to the plasma membrane. When bound to Rab11, prevents the formation of the ciliogenic Rab11-Rabin8/RAB3IP-RAB11FIP3 complex, therefore inhibiting preciliary trafficking and ciliogenesis. Participates in neo-synthesized protein export by connecting the endoplasmic reticulum (ER) with the endosomal tubule via direct interactions with the integral ER proteins VAPA or VAPB and the endosomal protein GRAFs (GRAF1/ARHGAP26 or GRAF2/ARHGAP10), which facilitates the transfer of proteins such as E-cadherin, MPP14 and CFTR into a Rab8-Rab10-Rab11-dependent export route. This Homo sapiens (Human) protein is WD repeat-containing protein 44.